Here is a 244-residue protein sequence, read N- to C-terminus: MFKAELNDPNILRTSFDAISSIVDEVQIQLSAEGLRLDALDRSHITYVHLELKAELFDEYVCDEPERINVDTEELMKVLKRAKANDRVILSTDEGNLIIQFEGEAVRTFKIRLIDIEYETPSPPEIEYENEFEVPFQLLKDSIADIDIFSDKITFRVDEDRFIASAEGEFGDAQIEYLHGERIDKPARSIYSLDKIKEMLKADKFSETAIINLGDDMPLKLTLKMASKEGELSFLLAPRIEAEE.

This sequence belongs to the PCNA family. As to quaternary structure, homotrimer. The subunits circularize to form a toroid; DNA passes through its center. Replication factor C (RFC) is required to load the toroid on the DNA.

Functionally, sliding clamp subunit that acts as a moving platform for DNA processing. Responsible for tethering the catalytic subunit of DNA polymerase to DNA during high-speed replication. In conjunction with replication factor C (RFC) stimulates DNA synthesis by PolB, relieving inhibition by replication protein A (RPA). This Methanothermobacter thermautotrophicus (strain ATCC 29096 / DSM 1053 / JCM 10044 / NBRC 100330 / Delta H) (Methanobacterium thermoautotrophicum) protein is DNA polymerase sliding clamp.